Consider the following 207-residue polypeptide: MVESLFPSIENTGESSRRKKPRISETAEAEIEARRVNEESLKRWKTNRVQQIYACKLVEALRRVRQRSSTTSNNETDKLVSGAAREIRDTADRVLAASARGTTRWSRAILASRVRAKLKKHRKAKKSTGNCKSRKGLTETNRIKLPAVERKLKILGRLVPGCRKVSVPNLLDEATDYIAALEMQVRAMEALAELLTAAAPRTTLTGT.

The segment at methionine 1–glutamate 25 is disordered. One can recognise a bHLH domain in the interval lysine 132–leucine 181.

Homodimer. Interacts with PRE3.

It localises to the nucleus. Functionally, atypical bHLH transcription factor probably unable to bind DNA. Negatively regulates brassinosteroid signaling. The protein is Transcription factor bHLH149 (BHLH149) of Arabidopsis thaliana (Mouse-ear cress).